We begin with the raw amino-acid sequence, 282 residues long: MDVEEKRVSSGYAKPPWIFKGSALYQIHLVKAATARAFIPKEFRLVEAFGYTLGGFFLASYDDSPAGVFDELVVIAGIVWNPPTSCAWAARVLVNSDEACHHGRKEVGLPSQVARFSKNITAVPKQKRDRAFGFLDTFGLGTTLSHPENLMEVKVSEVDSAASTDICNIQIRSDETKVGNWMGPAIKMALPSFSGNTIYNSNLLKYSCHLHCRVRPVRPAVVSGALEDETEKFTEQNHTSQESLENERQLSKAVMLSKPIIALQFKCLTMQVEAPVVIYPSK.

In terms of biological role, required for neoxanthin biosynthesis. Probably not involved directly in the enzymatic conversion of violaxanthin to neoxanthin. Is necessary but not sufficient for neoxanthin synthesis. The sequence is that of Protein NEOXANTHIN-DEFICIENT 1 from Arabidopsis thaliana (Mouse-ear cress).